The following is a 1013-amino-acid chain: GTPase-activating Rap/Ran-GAP domain-like protein 3 (1013 aa).

Ser-45 is modified (phosphoserine). The 217-residue stretch at 191–407 (LLVLEEQEGS…RTLDMLIRSL (217 aa)) folds into the Rap-GAP domain. 2 positions are modified to phosphoserine: Ser-426 and Ser-432. One can recognise a CNH domain in the interval 489-800 (PHEAVCADPW…QLVASRSDIY (312 aa)). 2 disordered regions span residues 810–842 (VSSGGSSKGASARNSPQTPPGRDTPVFPSSLGE) and 913–1013 (LLGL…IDLK). Low complexity predominate over residues 811-821 (SSGGSSKGASA). A Phosphothreonine modification is found at Thr-827. Residues 952-962 (SSSSDRIPSGS) show a composition bias toward low complexity. Polar residues-rich tracts occupy residues 963–982 (LESASTSEANPEGHSASSDQ) and 993–1003 (VSGSSPFQLTA).

This sequence belongs to the GARNL3 family.

This Homo sapiens (Human) protein is GTPase-activating Rap/Ran-GAP domain-like protein 3 (GARNL3).